Consider the following 95-residue polypeptide: Citrate lyase acyl carrier protein (95 aa).

Serine 14 carries the post-translational modification O-(phosphoribosyl dephospho-coenzyme A)serine.

It belongs to the CitD family. As to quaternary structure, oligomer with a subunit composition of (alpha,beta,gamma)6.

It localises to the cytoplasm. Covalent carrier of the coenzyme of citrate lyase. This is Citrate lyase acyl carrier protein from Haemophilus ducreyi (strain 35000HP / ATCC 700724).